We begin with the raw amino-acid sequence, 174 residues long: Ribulose bisphosphate carboxylase small subunit, chloroplastic (174 aa).

A chloroplast-targeting transit peptide spans 1–45 (MAPTVMASSATSVAPFQGLKSTAGLPVSRRSNASSASVSNGGRIR).

It belongs to the RuBisCO small chain family. Heterohexadecamer of 8 large and 8 small subunits.

The protein resides in the plastid. It localises to the chloroplast. In terms of biological role, ruBisCO catalyzes two reactions: the carboxylation of D-ribulose 1,5-bisphosphate, the primary event in carbon dioxide fixation, as well as the oxidative fragmentation of the pentose substrate. Both reactions occur simultaneously and in competition at the same active site. Although the small subunit is not catalytic it is essential for maximal activity. The sequence is that of Ribulose bisphosphate carboxylase small subunit, chloroplastic from Hordeum vulgare (Barley).